A 190-amino-acid polypeptide reads, in one-letter code: Dynein axonemal light chain 1 (190 aa).

LRR repeat units follow at residues 49–70, 71–92, 94–115, and 116–137; these read VCEKLSLSTNCIEKIANLNGLK, NLKILSLGRNNIKNLNGLEAVG, SLEELWISYNSIEKLKGIHVLK, and KLKVLLMSNNQVKDWGEFNKLQ. An LRRCT domain is found at 150–190; it reads NPLEEKHSAEGDWQDRVTKSLKALKKLDGTPIIKNDEEEED.

The protein belongs to the dynein light chain LC1-type family. As to quaternary structure, interacts with DNAH5, a outer arm dynein heavy chain. Interacts with tubulin located within the A-tubule of the outer doublets in a ATP-independent manner.

It is found in the cytoplasm. The protein localises to the cytoskeleton. The protein resides in the cilium axoneme. Functionally, part of the multisubunit axonemal ATPase complexes that generate the force for cilia motility and govern beat frequency. Component of the outer arm dynein (ODA). May be involved in a mechanosensory feedback mechanism controlling ODA activity based on external conformational cues by tethering the outer arm dynein heavy chain (DNAH5) to the microtubule within the axoneme. This chain is Dynein axonemal light chain 1 (DNAL1), found in Ciona intestinalis (Transparent sea squirt).